The primary structure comprises 152 residues: Superoxide dismutase [Cu-Zn] (152 aa).

Positions 45, 47, and 62 each coordinate Cu cation. C56 and C145 are disulfide-bonded. Zn(2+) is bound by residues H62, H70, H79, and D82. H119 lines the Cu cation pocket.

The protein belongs to the Cu-Zn superoxide dismutase family. As to quaternary structure, homodimer. It depends on Cu cation as a cofactor. The cofactor is Zn(2+).

It is found in the cytoplasm. It carries out the reaction 2 superoxide + 2 H(+) = H2O2 + O2. Destroys radicals which are normally produced within the cells and which are toxic to biological systems. The chain is Superoxide dismutase [Cu-Zn] (SODCC) from Pisum sativum (Garden pea).